The chain runs to 486 residues: Cardiolipin synthase A (486 aa).

2 helical membrane passes run 3–23 (TFYT…IAGV) and 38–58 (MAWL…YLSF). 2 PLD phosphodiesterase domains span residues 219–246 (MDLR…VDPR) and 399–426 (EGGL…DMRS). Active-site residues include His224, Lys226, Asp231, His404, Lys406, and Asp411.

The protein belongs to the phospholipase D family. Cardiolipin synthase subfamily. ClsA sub-subfamily.

It is found in the cell inner membrane. It carries out the reaction 2 a 1,2-diacyl-sn-glycero-3-phospho-(1'-sn-glycerol) = a cardiolipin + glycerol. Functionally, catalyzes the reversible phosphatidyl group transfer from one phosphatidylglycerol molecule to another to form cardiolipin (CL) (diphosphatidylglycerol) and glycerol. The polypeptide is Cardiolipin synthase A (Yersinia pseudotuberculosis serotype IB (strain PB1/+)).